The chain runs to 445 residues: Phosphoglucosamine mutase (445 aa).

The Phosphoserine intermediate role is filled by S102. S102, D241, D243, and D245 together coordinate Mg(2+). At S102 the chain carries Phosphoserine.

This sequence belongs to the phosphohexose mutase family. Mg(2+) is required as a cofactor. Activated by phosphorylation.

It catalyses the reaction alpha-D-glucosamine 1-phosphate = D-glucosamine 6-phosphate. Its function is as follows. Catalyzes the conversion of glucosamine-6-phosphate to glucosamine-1-phosphate. In Shigella flexneri serotype 5b (strain 8401), this protein is Phosphoglucosamine mutase.